The chain runs to 386 residues: Ovalbumin (386 aa).

Gly2 is subject to N-acetylglycine. Position 69 is a phosphoserine (Ser69). A disulfide bridge connects residues Cys74 and Cys121. A glycan (N-linked (GlcNAc...) asparagine) is linked at Asn293. Ser345 bears the Phosphoserine mark.

The protein belongs to the serpin family. Ov-serpin subfamily. Post-translationally, the N-terminus is blocked.

Its subcellular location is the secreted. Functionally, storage protein of egg white. Lacks protease inhibitory activity. The polypeptide is Ovalbumin (SERPINB14) (Dromaius novaehollandiae (Emu)).